A 736-amino-acid chain; its full sequence is Serine/threonine-protein kinase BRSK2 (736 aa).

The region spanning 19 to 270 (YRLEKTLGKG…LEHIQKHIWY (252 aa)) is the Protein kinase domain. ATP-binding positions include 25–33 (LGKGQTGLV) and Lys48. The active-site Proton acceptor is the Asp141. Residue Thr174 is modified to Phosphothreonine; by LKB1. Position 260 is a phosphothreonine; by PKA (Thr260). Position 294 is a phosphoserine (Ser294). A UBA domain is found at 297–339 (DIDPDVLDSMHSLGCFRDRNKLLQDLLSEEENQEKMIYFLLLD). Over residues 345–366 (PSQEDEDLPPRNEIDPPRKRVD) the composition is skewed to basic and acidic residues. Disordered regions lie at residues 345–475 (PSQE…GVPW) and 493–513 (HRRK…PESS). 7 positions are modified to phosphoserine: Ser367, Ser382, Ser393, Ser412, Ala416, Ser423, and Ser427. Low complexity predominate over residues 410 to 428 (SRSISGASSGLSTSPLSSP). Residues 431-445 (TPHPSPRGSPLPTPK) show a composition bias toward pro residues. The residue at position 455 (Ser455) is a Phosphoserine. Phosphothreonine is present on residues Thr459, Thr463, and Thr509. Phosphoserine occurs at positions 512, 513, and 520. The KEN box motif lies at 603–605 (KEN). The disordered stretch occupies residues 681–736 (KNGQAAQAPSTPAKRSAHGPLGDSAAAGPGPGGDAEYPTGKDTAKMGPPTARREQP). The segment covering 699–708 (GPLGDSAAAG) has biased composition (low complexity).

It belongs to the protein kinase superfamily. CAMK Ser/Thr protein kinase family. SNF1 subfamily. Interacts with FZR1, a regulatory subunit of the APC ubiquitin ligase complex. Interacts with COPS5. Interacts with PAK1. Mg(2+) is required as a cofactor. Post-translationally, phosphorylated at Thr-174 by STK11/LKB1 in complex with STE20-related adapter-alpha (STRADA) pseudo kinase and CAB39. Not phosphorylated at Thr-174 by CaMKK2. In contrast, it is phosphorylated and activated by CaMKK1. May be inactivated via dephosphorylation of Thr-174 by PP2C. Phosphorylated at Thr-260 by PKA. Phosphorylation at Thr-260 by PKA was not observed in another study, but this may reflect differences in the experimental approach. Phosphorylation at Thr-260 seems to play a role in the regulation of insulin secretion. In terms of processing, polyubiquitinated by the APC complex in conjunction with FZR1, leading to its proteasomal degradation. Targeted for proteasomal degradation by interaction with COPS5. BRSK2 levels change during the cell cycle. BRSK2 levels are low at the G1/S boundary and gradually increase as cells progress into G2 phase. BRSK2 levels decrease rapidly at the end of mitosis. In terms of tissue distribution, detected in pancreas islets (at protein level).

Its subcellular location is the cytoplasm. The protein localises to the cytoskeleton. The protein resides in the microtubule organizing center. It is found in the centrosome. It localises to the perinuclear region. Its subcellular location is the endoplasmic reticulum. The catalysed reaction is L-seryl-[protein] + ATP = O-phospho-L-seryl-[protein] + ADP + H(+). The enzyme catalyses L-threonyl-[protein] + ATP = O-phospho-L-threonyl-[protein] + ADP + H(+). It catalyses the reaction L-seryl-[tau protein] + ATP = O-phospho-L-seryl-[tau protein] + ADP + H(+). It carries out the reaction L-threonyl-[tau protein] + ATP = O-phospho-L-threonyl-[tau protein] + ADP + H(+). With respect to regulation, activated by phosphorylation on Thr-174 by STK11/LKB1. In terms of biological role, serine/threonine-protein kinase that plays a key role in polarization of neurons and axonogenesis, cell cycle progress and insulin secretion. Phosphorylates CDK16, CDC25C, MAPT/TAU, PAK1 and WEE1. Following phosphorylation and activation by STK11/LKB1, acts as a key regulator of polarization of cortical neurons, probably by mediating phosphorylation of microtubule-associated proteins such as MAPT/TAU at 'Thr-529' and 'Ser-579'. Also regulates neuron polarization by mediating phosphorylation of WEE1 at 'Ser-642' in postmitotic neurons, leading to down-regulate WEE1 activity in polarized neurons. Plays a role in the regulation of the mitotic cell cycle progress and the onset of mitosis. Plays a role in the regulation of insulin secretion in response to elevated glucose levels, probably via phosphorylation of CDK16 and PAK1. While BRSK2 phosphorylated at Thr-174 can inhibit insulin secretion, BRSK2 phosphorylated at Thr-260 can promote insulin secretion. Regulates reorganization of the actin cytoskeleton. May play a role in the apoptotic response triggered by endoplasmic reticulum (ER) stress. The sequence is that of Serine/threonine-protein kinase BRSK2 (BRSK2) from Homo sapiens (Human).